A 370-amino-acid chain; its full sequence is MLKEFEIEPLLKDKAPHQIKAIVAMSGGVDSSVAAALLHNLGYQVIGVTLQLYGTDGNANARKGACCAGQDIYDAKRVAESVGFPHYILNYEEIFKKEVIEDFASTYMRGETPIPCVRCNQTVKFRDLLQVTKNLGADVLVTGHYVRRLEKNGEVKLCRSIDKSKDQSYFLFATTQEQLKLLRFPLGGFYKSDIRKLAKYFSLQISEKPDSQDICFVSESYSKTIAKLAPQSVQKGKIVDVNGKVLGEHSGIVNFTVGQRKGLGIAHNEPLYVIKINTENNEVIVGPINVLMQKKILIKELNWLEQPKEGMEVTVKLRSSHAGSLATIHSTDEKNKACVILNDDYFGISPGQACVAYKGEQVIGGGWICS.

ATP-binding positions include 24-31 (AMSGGVDS) and Leu50. Cys119 serves as the catalytic Nucleophile. A disulfide bridge links Cys119 with Cys215. Gly143 is an ATP binding site. The tract at residues 165 to 167 (KDQ) is interaction with tRNA. Cys215 acts as the Cysteine persulfide intermediate in catalysis.

It belongs to the MnmA/TRMU family.

The protein localises to the cytoplasm. It carries out the reaction S-sulfanyl-L-cysteinyl-[protein] + uridine(34) in tRNA + AH2 + ATP = 2-thiouridine(34) in tRNA + L-cysteinyl-[protein] + A + AMP + diphosphate + H(+). Catalyzes the 2-thiolation of uridine at the wobble position (U34) of tRNA, leading to the formation of s(2)U34. This chain is tRNA-specific 2-thiouridylase MnmA, found in Wolbachia sp. subsp. Drosophila simulans (strain wRi).